Consider the following 329-residue polypeptide: Thioredoxin domain-containing protein 6 (329 aa).

The Thioredoxin domain maps to 11–115 (QVNINTQELW…QKTILQQLEA (105 aa)). Residues 157–303 (GKTCTLGIIK…LFPSFKFSDK (147 aa)) are NDK. Residues 303-329 (KDKEAPPGAEAQTMVGPVEDPCMSERI) form a disordered region.

Belongs to the NDK family. Monomer and homodimer. In terms of tissue distribution, expressed in lung airway epithelium (at protein level).

It is found in the cytoplasm. The protein resides in the cytoskeleton. It localises to the cilium axoneme. Its subcellular location is the dynein axonemal particle. Its function is as follows. May be a regulator of microtubule physiology. This Mus musculus (Mouse) protein is Thioredoxin domain-containing protein 6.